The following is a 326-amino-acid chain: Probable UDP-3-O-acyl-N-acetylglucosamine deacetylase 2, mitochondrial (326 aa).

A mitochondrion-targeting transit peptide spans 1 to 21 (MRLPVTVKATKPSFLVIWIRY). Zn(2+) is bound by residues His-109, His-281, and Asp-285.

Belongs to the LpxC family. It depends on Zn(2+) as a cofactor.

It localises to the mitochondrion. The catalysed reaction is a UDP-3-O-[(3R)-3-hydroxyacyl]-N-acetyl-alpha-D-glucosamine + H2O = a UDP-3-O-[(3R)-3-hydroxyacyl]-alpha-D-glucosamine + acetate. Its pathway is glycolipid biosynthesis; lipid IV(A) biosynthesis; lipid IV(A) from (3R)-3-hydroxytetradecanoyl-[acyl-carrier-protein] and UDP-N-acetyl-alpha-D-glucosamine: step 2/6. Functionally, involved in the biosynthesis of lipid A, a phosphorylated glycolipid that in bacteria anchors the lipopolysaccharide to the outer membrane of the cell. Lipid A-like molecules in plants may serve as structural components of the outer membranes of mitochondria and/or chloroplasts, or may be involved in signal transduction or plant defense responses (Potential). This chain is Probable UDP-3-O-acyl-N-acetylglucosamine deacetylase 2, mitochondrial (LPXC2), found in Arabidopsis thaliana (Mouse-ear cress).